A 1025-amino-acid polypeptide reads, in one-letter code: MPQNADSLAVVLKCRDWENPGVTQLNRLEAHPPFCSWRNADDARVNRDSAQKRSLNGEWTFAWFSAPEAVPESWRTSDLQQADSVRVPSNWQMDGYDAPIYTNVTYPIPVNPPFVPADNPTGCYSLTFSIDADWLQAGQTRIIFDGVNSAFHLWCNSRWVGYGQDSRLPSEFDLTHFLLKGENRLAVMVLRWSDGSYLEDQDMWRMSGIFRDVSLLHKPATQIRDLRINTRFNDDFSRAVLEAEVRTTGERRDDLRVTVQLWDSETFVGEKTAPLGSEIIDERGAYPDRTTLRLNVEHPALWSAETPHLYRAVVQLHAADGTLIEAEACDVGFRQVSIENGLLLLNGKPLLIRGANRHEHHPENGQVMDKETMIKDILLMKQNNFNAVRCSHYPNHPLWYTLCDRYGLYVVDEANIETHGMVPMNRLSDDPVWLPAMSQRVTRMVQRDRNHPSIIIWSLGNESGHGANHDALYRWIKSEDPSRPVQYEGGGANTAATDIICPMYARVDQDQPFPAVPKWSIKKWLSMPGEQRPLILCEYAHAMGNSLGGYAKYWQAFRQYPRLQGGFVWDWVDQSLIKYDDDGRPWSAYGGDFGDAPNDRQFCMNGLVFADRTPHPSLYEAKHAQQFFQFALLPGAECQIEVTSEYLFRHSDNEVLHWSLALDGNPLTAGVVTLDIPPQGRQIIALPALPEAETAGQLWLTVRVEQPQATAWSQAGHISAWQQWKLGEKLATQWPQHAGNAPQLTSSGTAFRIVAGEKRWEFSRQQGVLTQFWIGEEAQLLTPLVDQFTRAPLDNDIGVSEATRIDPNAWVERWKAAGHYQAKAVLLQCDADTLASAVLITTAHAWQYQGETLFISRKTYRIDGNGEMQITVDVDVASGTPHPARIGLSCQLAQVAERVNWLGLGPHENYPDRLSAACFERWDLPLEEMYTPYVFPSENGLRCGTRELLYGAHQWRGDFQFNISRYGQKQLMETSHRHLLQPEAGTWLNIDGFHMGVGGDDSWSPSVSAEYQLSAGRYHYQISWR.

Positions 103 and 202 each coordinate substrate. Position 202 (aspartate 202) interacts with Na(+). Mg(2+)-binding residues include glutamate 417, histidine 419, and glutamate 462. Substrate-binding positions include glutamate 462 and 538–541 (EYAH). Glutamate 462 acts as the Proton donor in catalysis. Glutamate 538 serves as the catalytic Nucleophile. Mg(2+) is bound at residue asparagine 598. Residues phenylalanine 602 and asparagine 605 each contribute to the Na(+) site. Residues asparagine 605 and tryptophan 1003 each coordinate substrate.

This sequence belongs to the glycosyl hydrolase 2 family. In terms of assembly, homotetramer. It depends on Mg(2+) as a cofactor. Na(+) is required as a cofactor.

It catalyses the reaction Hydrolysis of terminal non-reducing beta-D-galactose residues in beta-D-galactosides.. The protein is Beta-galactosidase of Citrobacter koseri (strain ATCC BAA-895 / CDC 4225-83 / SGSC4696).